Reading from the N-terminus, the 98-residue chain is NADH-ubiquinone oxidoreductase chain 4L (98 aa).

The next 3 helical transmembrane spans lie at 2 to 22 (PSIS…MLVF), 29 to 49 (SLLC…LTIM), and 61 to 81 (ILLL…LVMM).

The protein belongs to the complex I subunit 4L family. As to quaternary structure, core subunit of respiratory chain NADH dehydrogenase (Complex I) which is composed of 45 different subunits.

It is found in the mitochondrion inner membrane. The enzyme catalyses a ubiquinone + NADH + 5 H(+)(in) = a ubiquinol + NAD(+) + 4 H(+)(out). Its function is as follows. Core subunit of the mitochondrial membrane respiratory chain NADH dehydrogenase (Complex I) which catalyzes electron transfer from NADH through the respiratory chain, using ubiquinone as an electron acceptor. Part of the enzyme membrane arm which is embedded in the lipid bilayer and involved in proton translocation. The sequence is that of NADH-ubiquinone oxidoreductase chain 4L (MT-ND4L) from Lepilemur seali (Seal's sportive lemur).